Consider the following 56-residue polypeptide: Large ribosomal subunit protein bL33A (56 aa).

It belongs to the bacterial ribosomal protein bL33 family.

The polypeptide is Large ribosomal subunit protein bL33A (Cutibacterium acnes (strain DSM 16379 / KPA171202) (Propionibacterium acnes)).